Here is a 269-residue protein sequence, read N- to C-terminus: Tryptophan synthase alpha chain (269 aa).

Residues glutamate 49 and aspartate 60 each act as proton acceptor in the active site.

Belongs to the TrpA family. As to quaternary structure, tetramer of two alpha and two beta chains.

It carries out the reaction (1S,2R)-1-C-(indol-3-yl)glycerol 3-phosphate + L-serine = D-glyceraldehyde 3-phosphate + L-tryptophan + H2O. Its pathway is amino-acid biosynthesis; L-tryptophan biosynthesis; L-tryptophan from chorismate: step 5/5. Functionally, the alpha subunit is responsible for the aldol cleavage of indoleglycerol phosphate to indole and glyceraldehyde 3-phosphate. The sequence is that of Tryptophan synthase alpha chain from Klebsiella aerogenes (Enterobacter aerogenes).